Here is a 118-residue protein sequence, read N- to C-terminus: Ribosome-binding factor A (118 aa).

This sequence belongs to the RbfA family. In terms of assembly, monomer. Binds 30S ribosomal subunits, but not 50S ribosomal subunits or 70S ribosomes.

The protein localises to the cytoplasm. Its function is as follows. One of several proteins that assist in the late maturation steps of the functional core of the 30S ribosomal subunit. Associates with free 30S ribosomal subunits (but not with 30S subunits that are part of 70S ribosomes or polysomes). Required for efficient processing of 16S rRNA. May interact with the 5'-terminal helix region of 16S rRNA. The protein is Ribosome-binding factor A of Bacillus cereus (strain AH820).